A 323-amino-acid polypeptide reads, in one-letter code: Elongation factor P--(R)-beta-lysine ligase (323 aa).

Substrate is bound at residue 76–78 (SPE). Residues 100 to 102 (RNE) and asparagine 109 contribute to the ATP site. Tyrosine 118 lines the substrate pocket. 242-243 (EL) contributes to the ATP binding site. Glutamate 249 contacts substrate. Residue glycine 298 participates in ATP binding.

Belongs to the class-II aminoacyl-tRNA synthetase family. EpmA subfamily. Homodimer.

The catalysed reaction is D-beta-lysine + L-lysyl-[protein] + ATP = N(6)-((3R)-3,6-diaminohexanoyl)-L-lysyl-[protein] + AMP + diphosphate + H(+). Functionally, with EpmB is involved in the beta-lysylation step of the post-translational modification of translation elongation factor P (EF-P). Catalyzes the ATP-dependent activation of (R)-beta-lysine produced by EpmB, forming a lysyl-adenylate, from which the beta-lysyl moiety is then transferred to the epsilon-amino group of a conserved specific lysine residue in EF-P. The polypeptide is Elongation factor P--(R)-beta-lysine ligase (Haemophilus influenzae (strain PittGG)).